The chain runs to 324 residues: DNA-directed RNA polymerase subunit alpha (324 aa).

The segment at 1-230 (MQSSGLLKPR…EQLSVFADLE (230 aa)) is alpha N-terminal domain (alpha-NTD). An alpha C-terminal domain (alpha-CTD) region spans residues 244-324 (VDPVLLRPVD…NWPPAGLEKA (81 aa)).

This sequence belongs to the RNA polymerase alpha chain family. As to quaternary structure, homodimer. The RNAP catalytic core consists of 2 alpha, 1 beta, 1 beta' and 1 omega subunit. When a sigma factor is associated with the core the holoenzyme is formed, which can initiate transcription.

It carries out the reaction RNA(n) + a ribonucleoside 5'-triphosphate = RNA(n+1) + diphosphate. DNA-dependent RNA polymerase catalyzes the transcription of DNA into RNA using the four ribonucleoside triphosphates as substrates. The protein is DNA-directed RNA polymerase subunit alpha of Dechloromonas aromatica (strain RCB).